A 526-amino-acid polypeptide reads, in one-letter code: Probable DNA ligase (526 aa).

Glu228 provides a ligand contact to ATP. The N6-AMP-lysine intermediate role is filled by Lys230. ATP is bound by residues Arg235, Arg250, Glu279, Phe319, Arg391, and Lys397.

Belongs to the ATP-dependent DNA ligase family. Mg(2+) serves as cofactor.

It carries out the reaction ATP + (deoxyribonucleotide)n-3'-hydroxyl + 5'-phospho-(deoxyribonucleotide)m = (deoxyribonucleotide)n+m + AMP + diphosphate.. Its function is as follows. DNA ligase that seals nicks in double-stranded DNA during DNA replication, DNA recombination and DNA repair. This Mycobacterium avium (strain 104) protein is Probable DNA ligase.